A 356-amino-acid chain; its full sequence is Phospho-N-acetylmuramoyl-pentapeptide-transferase (356 aa).

A run of 9 helical transmembrane segments spans residues 27-47 (AAAI…IGWM), 74-94 (MGGL…MDFA), 97-117 (YVWA…IDDY), 128-148 (VSGK…CYLI), 164-184 (PVID…VGTA), 201-221 (VIIA…AVFA), 241-261 (AIIG…AIFM), 284-304 (IVLG…IIQV), and 333-353 (TVVI…LATL).

The protein belongs to the glycosyltransferase 4 family. MraY subfamily. It depends on Mg(2+) as a cofactor.

Its subcellular location is the cell inner membrane. It carries out the reaction UDP-N-acetyl-alpha-D-muramoyl-L-alanyl-gamma-D-glutamyl-meso-2,6-diaminopimeloyl-D-alanyl-D-alanine + di-trans,octa-cis-undecaprenyl phosphate = di-trans,octa-cis-undecaprenyl diphospho-N-acetyl-alpha-D-muramoyl-L-alanyl-D-glutamyl-meso-2,6-diaminopimeloyl-D-alanyl-D-alanine + UMP. It participates in cell wall biogenesis; peptidoglycan biosynthesis. In terms of biological role, catalyzes the initial step of the lipid cycle reactions in the biosynthesis of the cell wall peptidoglycan: transfers peptidoglycan precursor phospho-MurNAc-pentapeptide from UDP-MurNAc-pentapeptide onto the lipid carrier undecaprenyl phosphate, yielding undecaprenyl-pyrophosphoryl-MurNAc-pentapeptide, known as lipid I. This is Phospho-N-acetylmuramoyl-pentapeptide-transferase from Zymomonas mobilis subsp. mobilis (strain ATCC 31821 / ZM4 / CP4).